Consider the following 1034-residue polypeptide: Glycine dehydrogenase (decarboxylating) B, mitochondrial (1034 aa).

Residues 1–63 (MERARRLAIL…LNGFGSQVRT (63 aa)) constitute a mitochondrion transit peptide. Lys770 is subject to N6-(pyridoxal phosphate)lysine.

The protein belongs to the GcvP family. As to quaternary structure, homodimer. The glycine cleavage system is composed of four proteins: P, T, L and H. Pyridoxal 5'-phosphate serves as cofactor.

Its subcellular location is the mitochondrion. It catalyses the reaction N(6)-[(R)-lipoyl]-L-lysyl-[glycine-cleavage complex H protein] + glycine + H(+) = N(6)-[(R)-S(8)-aminomethyldihydrolipoyl]-L-lysyl-[glycine-cleavage complex H protein] + CO2. Functionally, the glycine cleavage system catalyzes the degradation of glycine. The P protein binds the alpha-amino group of glycine through its pyridoxal phosphate cofactor; CO(2) is released and the remaining methylamine moiety is then transferred to the lipoamide cofactor of the H protein. This is Glycine dehydrogenase (decarboxylating) B, mitochondrial (GDCSPB) from Flaveria pringlei.